Here is a 208-residue protein sequence, read N- to C-terminus: Small ribosomal subunit protein uS5 (208 aa).

Positions 1-15 (MTDSNNQSPNKKTSG) are enriched in polar residues. The disordered stretch occupies residues 1-54 (MTDSNNQSPNKKTSGSSSAPPAADGRQENRRSRGEKRGGRRDRRGQERDSEWQE). Composition is skewed to basic and acidic residues over residues 25 to 37 (GRQE…GEKR) and 44 to 54 (RGQERDSEWQE). The S5 DRBM domain maps to 52–115 (WQERVVQIRR…ADGKKHLVRV (64 aa)).

Belongs to the universal ribosomal protein uS5 family. In terms of assembly, part of the 30S ribosomal subunit. Contacts proteins S4 and S8.

Its function is as follows. With S4 and S12 plays an important role in translational accuracy. Located at the back of the 30S subunit body where it stabilizes the conformation of the head with respect to the body. The protein is Small ribosomal subunit protein uS5 of Prochlorococcus marinus (strain NATL2A).